The following is a 95-amino-acid chain: uncharacterized protein (95 aa).

This is an uncharacterized protein from Bacillus subtilis (strain 168).